Here is a 284-residue protein sequence, read N- to C-terminus: Bifunctional protein FolD (284 aa).

NADP(+) contacts are provided by residues 165 to 167 (GRS), Ser190, and Val231.

The protein belongs to the tetrahydrofolate dehydrogenase/cyclohydrolase family. In terms of assembly, homodimer.

It catalyses the reaction (6R)-5,10-methylene-5,6,7,8-tetrahydrofolate + NADP(+) = (6R)-5,10-methenyltetrahydrofolate + NADPH. The enzyme catalyses (6R)-5,10-methenyltetrahydrofolate + H2O = (6R)-10-formyltetrahydrofolate + H(+). Its pathway is one-carbon metabolism; tetrahydrofolate interconversion. Catalyzes the oxidation of 5,10-methylenetetrahydrofolate to 5,10-methenyltetrahydrofolate and then the hydrolysis of 5,10-methenyltetrahydrofolate to 10-formyltetrahydrofolate. This chain is Bifunctional protein FolD, found in Brevibacillus brevis (strain 47 / JCM 6285 / NBRC 100599).